Reading from the N-terminus, the 238-residue chain is Probable RNA/DNA demethylase ALKBH6 (238 aa).

Residues 96–227 form the Fe2OG dioxygenase domain; that stretch reads PANHVLVNQY…RVSLTIRRVP (132 aa). Asn-103 and Tyr-105 together coordinate 2-oxoglutarate. The Fe cation site is built by His-114 and Asp-116. The tract at residues 138-161 is disordered; the sequence is YEPRRPEDDDPTEQPRPPPRPTTS. Position 182 (His-182) interacts with Fe cation. 2 residues coordinate 2-oxoglutarate: Arg-218 and Ser-220.

The protein belongs to the alkB family. In terms of assembly, interacts with VCPKMT. The cofactor is Fe(2+). Widely expressed, with highest expression in testis and pancreas.

It is found in the cytoplasm. Its subcellular location is the nucleus. In terms of biological role, probable Fe(2+)/2-oxoglutarate-dependent dioxygenase involved in oxidative demethylation of nucleic acids. Binds nucleic acids with a preference for ssDNA or ssRNA to other types of DNAs. May play a role in nucleic acid damage repair. In Homo sapiens (Human), this protein is Probable RNA/DNA demethylase ALKBH6.